The primary structure comprises 243 residues: Terpene cyclase atmB (243 aa).

The next 7 membrane-spanning stretches (helical) occupy residues 19-39 (IADV…VGMV), 48-68 (YGMA…YGLI), 78-98 (GVFL…IKFG), 112-132 (LPLI…ALAA), 134-154 (IGPA…LSVG), 169-189 (SYTL…SAWL), and 205-225 (LILW…VCFY).

Belongs to the paxB family.

The protein localises to the membrane. In terms of biological role, terpene cyclase; part of the ATM2 gene cluster that mediates the biosynthesis of aflatrem, a tremorgenic mycotoxin with acute neurotoxic effects. Synthesis of geranylgeranyl diphosphate (GGPP) by AtmG (a GGPP synthase) precedes condensation of GGPP with indole 3-glycerol phosphate, followed by epoxidation and cyclization by AtmM (a FAD-dependent monooxygenase) and AtmC (a prenyltransferase) to produce paspaline. AtmB is also essential for paspaline production, but its exact role has not been identified yet. AtmP, a cytochrome P450 monooxygenase, subsequently converts paspaline to 13-desoxypaxilline via PC-M6 by removal of the C-30 methyl group and oxidation at C-10. AtmQ, a cytochrome P450 monooxygenase, then catalyzes the oxidation of 13-desoxypaxilline, first at C-7 to produce paspalicine and then at C-13 to form paspalinine. Finally, AtmD prenylates paspalinine to form aflatrem. This is Terpene cyclase atmB from Aspergillus flavus.